The chain runs to 780 residues: Aconitate hydratase, mitochondrial (780 aa).

Residues 1–27 (MAPYSLLVTRLQKALGVRQYHVASVLC) constitute a mitochondrion transit peptide. Lysine 31 is modified (N6-succinyllysine). Residue lysine 50 is modified to N6-acetyllysine; alternate. Lysine 50 carries the post-translational modification N6-succinyllysine; alternate. Glutamine 99 serves as a coordination point for substrate. Lysine 138 and lysine 144 each carry N6-acetyllysine; alternate. 2 positions are modified to N6-succinyllysine; alternate: lysine 138 and lysine 144. 192-194 (DSH) provides a ligand contact to substrate. An N6-acetyllysine; alternate modification is found at lysine 233. Lysine 233 carries the N6-succinyllysine; alternate modification. Residue cysteine 385 participates in [4Fe-4S] cluster binding. N6-succinyllysine is present on lysine 411. [4Fe-4S] cluster contacts are provided by cysteine 448 and cysteine 451. The substrate site is built by arginine 474 and arginine 479. An N6-acetyllysine; alternate mark is found at lysine 517 and lysine 523. Lysine 517 and lysine 523 each carry N6-succinyllysine; alternate. Basic and acidic residues predominate over residues 524-537 (LEAPDADELPRSDF). The segment at 524-560 (LEAPDADELPRSDFDPGQDTYQHPPKDSSGQRVDVSP) is disordered. Lysine 549 carries the post-translational modification N6-succinyllysine. Over residues 551 to 560 (SSGQRVDVSP) the composition is skewed to polar residues. Residue serine 559 is modified to Phosphoserine. Lysine 573 is modified (N6-acetyllysine; alternate). An N6-succinyllysine; alternate modification is found at lysine 573. An N6-succinyllysine mark is found at lysine 577 and lysine 591. Residue lysine 605 is modified to N6-acetyllysine; alternate. At lysine 605 the chain carries N6-succinyllysine; alternate. Arginine 607 lines the substrate pocket. The residue at position 628 (lysine 628) is an N6-succinyllysine. Serine 670 carries the post-translational modification Phosphoserine. Residue 670–671 (SR) coordinates substrate. An N6-succinyllysine modification is found at lysine 689. 2 positions are modified to N6-acetyllysine; alternate: lysine 723 and lysine 730. An N6-succinyllysine; alternate mark is found at lysine 723 and lysine 730. Residues lysine 736, lysine 739, and lysine 743 each carry the N6-acetyllysine modification.

It belongs to the aconitase/IPM isomerase family. As to quaternary structure, monomer. The cofactor is [4Fe-4S] cluster. Forms covalent cross-links mediated by transglutaminase TGM2, between a glutamine and the epsilon-amino group of a lysine residue, forming homopolymers and heteropolymers.

The protein resides in the mitochondrion. The enzyme catalyses citrate = D-threo-isocitrate. Its pathway is carbohydrate metabolism; tricarboxylic acid cycle; isocitrate from oxaloacetate: step 2/2. Catalyzes the isomerization of citrate to isocitrate via cis-aconitate. In Mus musculus (Mouse), this protein is Aconitate hydratase, mitochondrial (Aco2).